The sequence spans 226 residues: Putative ankyrin repeat protein RF_0939 (226 aa).

ANK repeat units follow at residues 56-86, 91-120, 125-154, and 157-194; these read VSTTELFLASSNNALKVAEWLVETKKANVNM, FKDTPLNSAARHGSYKVAEYLIAKGAAVNG, LLGPPLYEAVSGKYLNVAKLLLEKGAAVDQ, and SGETPLHAVAKNVRYTSKDIKDDEIYKLLVSYGADTNA.

This is Putative ankyrin repeat protein RF_0939 from Rickettsia felis (strain ATCC VR-1525 / URRWXCal2) (Rickettsia azadi).